Here is a 1382-residue protein sequence, read N- to C-terminus: Eukaryotic translation initiation factor 3 subunit A (1382 aa).

Residue Lys68 is modified to N6-acetyllysine. The stretch at 82-120 (NIKSLEDVVRAYLKMAEEKTEAAKEESQQMVLDIEDLDN) forms a coiled coil. Positions 315–498 (MQRMSTRVLL…RTLSFGSDLN (184 aa)) constitute a PCI domain. Phosphoserine is present on residues Ser492 and Ser584. The interaction with EIF3B stretch occupies residues 664–835 (LDPDFIMAKQ…REERERAERA (172 aa)). Disordered stretches follow at residues 810–844 (KEEE…LREY) and 866–1382 (EERE…TVRR). Basic and acidic residues-rich tracts occupy residues 866–1165 (EERE…DDSR), 1177–1328 (GWRE…DPPR), and 1336–1371 (SRDR…TKNE). Ser881, Ser882, and Ser895 each carry phosphoserine. Repeat unit 1 spans residues 925 to 934 (DEDRSHRRDE). The interval 925–1172 (DEDRSHRRDE…DSRPGPWRPL (248 aa)) is 25 X 10 AA approximate tandem repeats of [DE]-[DE]-[DE]-R-[SEVGFPILV]-[HPSN]-[RSW]-[RL]-[DRGTIHN]-[EPMANLGDT]. The 2; truncated repeat unit spans residues 935–942 (ERPRRLGD). Tandem repeats lie at residues 943 to 952 (DEDREPSLRP), 953 to 962 (DDDRVPRRGM), 963 to 972 (DDDRGPRRGP), 973 to 982 (EEDRFSRRGA), 983 to 992 (DDDRPSWRNT), 993 to 1002 (DDDRPPRRIA), 1003 to 1012 (DEDRGNWRHA), 1013 to 1022 (DDDRPPRRGL), 1023 to 1032 (DEDRGSWRTA), 1033 to 1042 (DEDRGPRRGM), 1043 to 1052 (DDDRGPRRGG), 1054 to 1063 (DDERSSWRNA), 1064 to 1073 (DDDRGPRRGL), 1074 to 1083 (DDDRGPRRGM), 1084 to 1093 (DDDRGPRRGM), 1094 to 1103 (DDDRGPRRGM), 1104 to 1113 (DDDRGPRRGL), 1114 to 1123 (DDDRGPWRNA), 1124 to 1133 (DDDRIPRRGA), and 1134 to 1143 (EDDRGPWRNM). Phosphoserine is present on Ser949. Residue Ser1028 is modified to Phosphoserine. One copy of the 23; truncated repeat lies at 1144-1152 (DDDRLSRRA). Residues 1153 to 1162 (DDDRFPRRGD) form repeat 24. The stretch at 1163–1172 (DSRPGPWRPL) is one 25; approximate repeat. 5 positions are modified to phosphoserine: Ser1188, Ser1198, Ser1262, Ser1336, and Ser1364.

As to quaternary structure, interacts with EIF4G1. Component of the eukaryotic translation initiation factor 3 (eIF-3) complex, which is composed of 13 subunits: EIF3A, EIF3B, EIF3C, EIF3D, EIF3E, EIF3F, EIF3G, EIF3H, EIF3I, EIF3J, EIF3K, EIF3L and EIF3M. The eIF-3 complex appears to include 3 stable modules: module A is composed of EIF3A, EIF3B, EIF3G and EIF3I; module B is composed of EIF3F, EIF3H, and EIF3M; and module C is composed of EIF3C, EIF3D, EIF3E, EIF3L and EIF3K. EIF3C of module C binds EIF3B of module A and EIF3H of module B, thereby linking the three modules. EIF3J is a labile subunit that binds to the eIF-3 complex via EIF3B. The eIF-3 complex interacts with RPS6KB1 under conditions of nutrient depletion. Mitogenic stimulation leads to binding and activation of a complex composed of MTOR and RPTOR, leading to phosphorylation and release of RPS6KB1 and binding of EIF4B to eIF-3. Also interacts with KRT7 and PIWIL2. Post-translationally, phosphorylated. Phosphorylation is enhanced upon serum stimulation.

Its subcellular location is the cytoplasm. RNA-binding component of the eukaryotic translation initiation factor 3 (eIF-3) complex, which is required for several steps in the initiation of protein synthesis. The eIF-3 complex associates with the 40S ribosome and facilitates the recruitment of eIF-1, eIF-1A, eIF-2:GTP:methionyl-tRNAi and eIF-5 to form the 43S pre-initiation complex (43S PIC). The eIF-3 complex stimulates mRNA recruitment to the 43S PIC and scanning of the mRNA for AUG recognition. The eIF-3 complex is also required for disassembly and recycling of post-termination ribosomal complexes and subsequently prevents premature joining of the 40S and 60S ribosomal subunits prior to initiation. The eIF-3 complex specifically targets and initiates translation of a subset of mRNAs involved in cell proliferation, including cell cycling, differentiation and apoptosis, and uses different modes of RNA stem-loop binding to exert either translational activation or repression. Functionally, (Microbial infection) Essential for the initiation of translation on type-1 viral ribosomal entry sites (IRESs), like for HCV, PV, EV71 or BEV translation. In terms of biological role, (Microbial infection) In case of FCV infection, plays a role in the ribosomal termination-reinitiation event leading to the translation of VP2. The sequence is that of Eukaryotic translation initiation factor 3 subunit A from Homo sapiens (Human).